The sequence spans 192 residues: Probable GTP-binding protein EngB (192 aa).

The EngB-type G domain occupies 22–192 (QIPEIVFAGR…LLAHLAQYIR (171 aa)). GTP contacts are provided by residues 30–37 (GRSNVGKS), 57–61 (GKTRL), 75–78 (DLPG), 142–145 (TKDD), and 172–174 (YSS). Mg(2+)-binding residues include S37 and T59.

It belongs to the TRAFAC class TrmE-Era-EngA-EngB-Septin-like GTPase superfamily. EngB GTPase family. The cofactor is Mg(2+).

In terms of biological role, necessary for normal cell division and for the maintenance of normal septation. This chain is Probable GTP-binding protein EngB, found in Chlorobium phaeobacteroides (strain DSM 266 / SMG 266 / 2430).